Reading from the N-terminus, the 955-residue chain is Centrosomal protein of 112 kDa (955 aa).

A coiled-coil region spans residues Gln-277–Arg-954.

The protein resides in the cytoplasm. It is found in the cytoskeleton. It localises to the microtubule organizing center. The protein localises to the centrosome. The polypeptide is Centrosomal protein of 112 kDa (CEP112) (Homo sapiens (Human)).